Consider the following 132-residue polypeptide: Phosphoribosyl-ATP pyrophosphatase (132 aa).

The protein belongs to the PRA-PH family.

It localises to the cytoplasm. The enzyme catalyses 1-(5-phospho-beta-D-ribosyl)-ATP + H2O = 1-(5-phospho-beta-D-ribosyl)-5'-AMP + diphosphate + H(+). It participates in amino-acid biosynthesis; L-histidine biosynthesis; L-histidine from 5-phospho-alpha-D-ribose 1-diphosphate: step 2/9. This Acidovorax sp. (strain JS42) protein is Phosphoribosyl-ATP pyrophosphatase.